A 105-amino-acid chain; its full sequence is Nitrogen fixation nifHD1 region GlnB-like protein 1 (105 aa).

It belongs to the P(II) protein family.

Functionally, could be involved in the regulation of nitrogen fixation. This chain is Nitrogen fixation nifHD1 region GlnB-like protein 1 (glnBA), found in Methanosarcina barkeri.